We begin with the raw amino-acid sequence, 308 residues long: Tetraacyldisaccharide 4'-kinase (308 aa).

63–70 (SFGGNGKT) contributes to the ATP binding site.

Belongs to the LpxK family.

The enzyme catalyses a lipid A disaccharide + ATP = a lipid IVA + ADP + H(+). Its pathway is glycolipid biosynthesis; lipid IV(A) biosynthesis; lipid IV(A) from (3R)-3-hydroxytetradecanoyl-[acyl-carrier-protein] and UDP-N-acetyl-alpha-D-glucosamine: step 6/6. Functionally, transfers the gamma-phosphate of ATP to the 4'-position of a tetraacyldisaccharide 1-phosphate intermediate (termed DS-1-P) to form tetraacyldisaccharide 1,4'-bis-phosphate (lipid IVA). This Campylobacter jejuni subsp. jejuni serotype O:2 (strain ATCC 700819 / NCTC 11168) protein is Tetraacyldisaccharide 4'-kinase.